We begin with the raw amino-acid sequence, 1226 residues long: E3 ubiquitin-protein ligase mind-bomb (1226 aa).

Over residues 1–12 (MSCAATLSSAKD) the composition is skewed to polar residues. Disordered stretches follow at residues 1 to 42 (MSCA…NTNT) and 66 to 87 (GGGG…AGGV). Residues 19 to 30 (SGGGGGGGGGGA) show a composition bias toward gly residues. Composition is skewed to low complexity over residues 31–42 (PTNSNTNTNTNT) and 73–86 (GGTT…AAGG). The MIB/HERC2 1 domain occupies 100 to 168 (VRRFSMEGVG…AYDLRILDSA (69 aa)). A ZZ-type zinc finger spans residues 174 to 226 (HEGTMCDTCRQQPIFGIRWKCAECINYDLCSICYHGDKHHLRHRFYRITTPGG). Zn(2+) is bound by residues Cys-179, Cys-182, Cys-194, Cys-197, Cys-203, Cys-206, His-212, and His-216. The MIB/HERC2 2 domain maps to 237–315 (SKKVLARGIF…MADLKVVNDA (79 aa)). ANK repeat units follow at residues 567-596 (AGHT…DVEI), 600-629 (DGDR…DLNA), 633-662 (RRQT…HPSL), 666-695 (EGDT…DITL), 699-731 (NGFN…IVEE), 735-765 (DGYT…NMDR), 769-798 (NLQT…DLNI), and 802-833 (DGDT…KLLM). The disordered stretch occupies residues 890–919 (TDDSELPGNVAGTSSSARARAASGSLNQSS). Over residues 900–914 (AGTSSSARARAASGS) the composition is skewed to low complexity. 2 RING-type zinc fingers span residues 970 to 1005 (CLVC…LICR) and 1017 to 1052 (CLVC…VLCR). Residues 1159-1181 (VNNFQMDDVQKLKQQLQDIKEQT) are a coiled coil. Residues 1183 to 1216 (CPVCFDRIKNMVFLCGHGTCQMCGDQIEGCPICR) form an RING-type 3 zinc finger.

Interacts with intracellular domain of Dl and Ser. As to expression, ubiquitous in the wing imaginal disk (at protein level).

It is found in the cytoplasm. The protein localises to the cell cortex. The catalysed reaction is S-ubiquitinyl-[E2 ubiquitin-conjugating enzyme]-L-cysteine + [acceptor protein]-L-lysine = [E2 ubiquitin-conjugating enzyme]-L-cysteine + N(6)-ubiquitinyl-[acceptor protein]-L-lysine.. The protein operates within protein modification; protein ubiquitination. E3 ubiquitin-protein ligase that mediates ubiquitination of Delta (Dl) and Serrate (Ser) receptors, which act as ligands of Notch proteins. Positively regulates the Notch signaling by ubiquitinating the intracellular domain of Dl and Ser, leading to endocytosis of Dl and Ser receptors. Regulates a subset of Notch signaling events, including wing margin specification, leg segmentation and vein determination, that are distinct from those events requiring neuralize (neur) activity. Also modulates lateral inhibition, a neur- and Dl-dependent signaling event, suggesting a distinct but partially complementary function with neur. This is E3 ubiquitin-protein ligase mind-bomb (mib1) from Drosophila melanogaster (Fruit fly).